The following is a 357-amino-acid chain: Probable cinnamyl alcohol dehydrogenase 7/8 (357 aa).

A Zn(2+)-binding site is contributed by Cys-47. Ser-49 provides a ligand contact to NADP(+). Zn(2+) is bound by residues His-69, Glu-70, Cys-100, Cys-103, Cys-106, Cys-114, and Cys-163. Residues Thr-167, 188-193, 211-216, Thr-251, Gly-275, and 298-300 contribute to the NADP(+) site; these read GLGGVG, SSSDKK, and SFI.

It belongs to the zinc-containing alcohol dehydrogenase family. Homodimer. Zn(2+) serves as cofactor.

The catalysed reaction is (E)-cinnamyl alcohol + NADP(+) = (E)-cinnamaldehyde + NADPH + H(+). It catalyses the reaction (E)-coniferol + NADP(+) = (E)-coniferaldehyde + NADPH + H(+). It carries out the reaction (E)-sinapyl alcohol + NADP(+) = (E)-sinapaldehyde + NADPH + H(+). The enzyme catalyses (E)-4-coumaroyl alcohol + NADP(+) = (E)-4-coumaraldehyde + NADPH + H(+). The catalysed reaction is (E)-caffeyl alcohol + NADP(+) = (E)-caffeyl aldehyde + NADPH + H(+). The protein operates within aromatic compound metabolism; phenylpropanoid biosynthesis. Functionally, involved in lignin biosynthesis. Catalyzes the final step specific for the production of lignin monomers. Catalyzes the NADPH-dependent reduction of coniferaldehyde, 5-hydroxyconiferaldehyde, sinapaldehyde, 4-coumaraldehyde and caffeyl aldehyde to their respective alcohols. The sequence is that of Probable cinnamyl alcohol dehydrogenase 7/8 (CAD7) from Picea abies (Norway spruce).